A 177-amino-acid polypeptide reads, in one-letter code: Large ribosomal subunit protein uL6 (177 aa).

This sequence belongs to the universal ribosomal protein uL6 family. Part of the 50S ribosomal subunit.

In terms of biological role, this protein binds to the 23S rRNA, and is important in its secondary structure. It is located near the subunit interface in the base of the L7/L12 stalk, and near the tRNA binding site of the peptidyltransferase center. The sequence is that of Large ribosomal subunit protein uL6 from Rickettsia typhi (strain ATCC VR-144 / Wilmington).